We begin with the raw amino-acid sequence, 196 residues long: Protein GrpE (196 aa).

Positions 1–39 (MSSKEQKTPEGQAPEEIIMDQHEEIEAVEPEASAEQVDP) are disordered.

It belongs to the GrpE family. Homodimer.

It localises to the cytoplasm. Participates actively in the response to hyperosmotic and heat shock by preventing the aggregation of stress-denatured proteins, in association with DnaK and GrpE. It is the nucleotide exchange factor for DnaK and may function as a thermosensor. Unfolded proteins bind initially to DnaJ; upon interaction with the DnaJ-bound protein, DnaK hydrolyzes its bound ATP, resulting in the formation of a stable complex. GrpE releases ADP from DnaK; ATP binding to DnaK triggers the release of the substrate protein, thus completing the reaction cycle. Several rounds of ATP-dependent interactions between DnaJ, DnaK and GrpE are required for fully efficient folding. The sequence is that of Protein GrpE from Escherichia coli (strain SMS-3-5 / SECEC).